Here is a 379-residue protein sequence, read N- to C-terminus: Lipoyl synthase, mitochondrial (379 aa).

Residues C94, C99, C105, C126, C130, C133, and S342 each contribute to the [4Fe-4S] cluster site. The Radical SAM core domain maps to 109–331 (GEDNGAATAT…EKEAMSMGFL (223 aa)).

The protein belongs to the radical SAM superfamily. Lipoyl synthase family. Requires [4Fe-4S] cluster as cofactor.

The protein localises to the mitochondrion. It carries out the reaction [[Fe-S] cluster scaffold protein carrying a second [4Fe-4S](2+) cluster] + N(6)-octanoyl-L-lysyl-[protein] + 2 oxidized [2Fe-2S]-[ferredoxin] + 2 S-adenosyl-L-methionine + 4 H(+) = [[Fe-S] cluster scaffold protein] + N(6)-[(R)-dihydrolipoyl]-L-lysyl-[protein] + 4 Fe(3+) + 2 hydrogen sulfide + 2 5'-deoxyadenosine + 2 L-methionine + 2 reduced [2Fe-2S]-[ferredoxin]. It participates in protein modification; protein lipoylation via endogenous pathway; protein N(6)-(lipoyl)lysine from octanoyl-[acyl-carrier-protein]: step 2/2. Its function is as follows. Catalyzes the radical-mediated insertion of two sulfur atoms into the C-6 and C-8 positions of the octanoyl moiety bound to the lipoyl domains of lipoate-dependent enzymes, thereby converting the octanoylated domains into lipoylated derivatives. This is Lipoyl synthase, mitochondrial from Leishmania braziliensis.